Reading from the N-terminus, the 193-residue chain is Bradykinin-potentiating and C-type natriuretic peptides (193 aa).

The signal sequence occupies residues 1 to 23 (MFVSRLAASGLLLLALLALSLDG). Residues 24 to 27 (KPVH) constitute a propeptide that is removed on maturation. Positions 25–173 (PVHQSKPGRS…RMKGLAKKAM (149 aa)) are disordered. Position 28 is a pyrrolidone carboxylic acid (Q28). 2 consecutive propeptides follow at residues 40–43 (LSAQ) and 58–64 (LSVQQWS). The residue at position 65 (Q65) is a Pyrrolidone carboxylic acid. Residues 75–169 (VVVQPHESPA…GGARRMKGLA (95 aa)) constitute a propeptide that is removed on maturation. Residues 95–123 (SPGPEAASGPAAPHRLPKSKGASATSAAS) are compositionally biased toward low complexity. Residues 125–150 (PMRDLRTDGKQERQKWGRMVQPDHHA) show a composition bias toward basic and acidic residues. The span at 152–162 (PGGGGGGGGGA) shows a compositional bias: gly residues. The span at 163 to 173 (RRMKGLAKKAM) shows a compositional bias: basic residues. C177 and C193 are joined by a disulfide.

The protein in the N-terminal section; belongs to the bradykinin-potentiating peptide family. It in the C-terminal section; belongs to the natriuretic peptide family. Expressed by the venom gland.

It is found in the secreted. Its function is as follows. Bradykinin-potentiating peptide both inhibits the activity of the angiotensin-converting enzyme (ACE) and enhances the action of bradykinin by inhibiting the peptidases that inactivate it. It acts as an indirect hypotensive agent. Neither synthetic Tf1, nor synthetic Tf2 show bradykinin-potentiating effects. In terms of biological role, has a vasorelaxant activity in rat aortic strips and a diuretic potency in anesthetized rats. Functionally, has a vasorelaxant activity in rat aortic strips and a diuretic potency in anesthetized rats. Is as potent as Tf-CNP. This Protobothrops flavoviridis (Habu) protein is Bradykinin-potentiating and C-type natriuretic peptides.